A 271-amino-acid chain; its full sequence is Cytosolic Fe-S cluster assembly factor NUBP2 (271 aa).

The residue at position 1 (methionine 1) is an N-acetylmethionine. 22–29 (GKGGVGKS) contacts ATP. [4Fe-4S] cluster-binding residues include cysteine 196 and cysteine 199.

The protein belongs to the Mrp/NBP35 ATP-binding proteins family. NUBP2/CFD1 subfamily. Heterotetramer of 2 NUBP1 and 2 NUBP2 chains. Interacts with KIFC1. Interacts with NUBP1. The cofactor is [4Fe-4S] cluster. Widely expressed with highest expression in skeletal muscle.

The protein localises to the nucleus. It is found in the cytoplasm. The protein resides in the cytoskeleton. It localises to the microtubule organizing center. Its subcellular location is the centrosome. The protein localises to the cilium axoneme. It is found in the centriole. Functionally, component of the cytosolic iron-sulfur (Fe/S) protein assembly (CIA) machinery. Required for maturation of extramitochondrial Fe-S proteins. The NUBP1-NUBP2 heterotetramer forms a Fe-S scaffold complex, mediating the de novo assembly of an Fe-S cluster and its transfer to target apoproteins. Negatively regulates cilium formation and structure. The sequence is that of Cytosolic Fe-S cluster assembly factor NUBP2 from Homo sapiens (Human).